Consider the following 492-residue polypeptide: Pyrin and HIN domain-containing protein 1 (492 aa).

The region spanning 1–88 is the Pyrin domain; it reads MANNYKKIVL…AETLKREKLK (88 aa). Disordered stretches follow at residues 106–199 and 400–492; these read KTKQ…KPLA and KNTN…PAVP. A compositionally biased stretch (basic and acidic residues) spans 142–159; that stretch reads PSEEETGTKRSKMSKEQT. A compositionally biased stretch (polar residues) spans 160 to 173; it reads RPSCSAGASTSTAM. Low complexity predominate over residues 181 to 194; sequence TSSSAPPNTSSTES. The HIN-200 domain maps to 199 to 399; sequence ANRHATASKN…SEMHSFIQIQ (201 aa). Polar residues-rich tracts occupy residues 416–432 and 460–492; these read QEQSQHPKPSEASTTLP and GAQSSPANFRITSPTVAPPLSSDTSTNRHPAVP.

Belongs to the HIN-200 family. In terms of assembly, interacts with MDM2. Expressed in spleen, lymph node and peripheral blood leukocytes, and at lower levels in thymus, bone marrow and fetal liver. Down-regulated in breast tumors.

It is found in the nucleus. It localises to the nucleoplasm. The protein resides in the nucleus speckle. Its function is as follows. Major mediator of the tumor suppressor activity of IFN in breast cancer cells. Promotes ubiquitination and subsequent degradation of MDM2, which leads to p53/TP53 stabilization. Promotes ubiquitination and subsequent degradation of HDAC1, which in turn enhances maspin expression, and impairs invasive activity of cancer cells. This is Pyrin and HIN domain-containing protein 1 (PYHIN1) from Homo sapiens (Human).